The primary structure comprises 269 residues: 4-hydroxy-tetrahydrodipicolinate reductase (269 aa).

NAD(+) contacts are provided by residues 11–16 and glutamate 37; that span reads GASGRM. An NADP(+)-binding site is contributed by arginine 38. NAD(+)-binding positions include 101-103 and 125-128; these read GTT and AGNM. The active-site Proton donor/acceptor is histidine 158. Histidine 159 is a binding site for (S)-2,3,4,5-tetrahydrodipicolinate. Lysine 162 functions as the Proton donor in the catalytic mechanism. Position 168-169 (168-169) interacts with (S)-2,3,4,5-tetrahydrodipicolinate; that stretch reads GT.

It belongs to the DapB family.

The protein localises to the cytoplasm. It catalyses the reaction (S)-2,3,4,5-tetrahydrodipicolinate + NAD(+) + H2O = (2S,4S)-4-hydroxy-2,3,4,5-tetrahydrodipicolinate + NADH + H(+). The enzyme catalyses (S)-2,3,4,5-tetrahydrodipicolinate + NADP(+) + H2O = (2S,4S)-4-hydroxy-2,3,4,5-tetrahydrodipicolinate + NADPH + H(+). The protein operates within amino-acid biosynthesis; L-lysine biosynthesis via DAP pathway; (S)-tetrahydrodipicolinate from L-aspartate: step 4/4. Catalyzes the conversion of 4-hydroxy-tetrahydrodipicolinate (HTPA) to tetrahydrodipicolinate. The sequence is that of 4-hydroxy-tetrahydrodipicolinate reductase from Cereibacter sphaeroides (strain KD131 / KCTC 12085) (Rhodobacter sphaeroides).